A 399-amino-acid chain; its full sequence is MEKFKLLKLGKPATLLLEDGTVFRGKSFSNPQTVTGEIVFNTGMTGYQEIFTDPSYNEQLVVLTYPEIGNTGTNLDDYESLKIQAKGIILKNLSNAYSNFRAMRSLLSFLKRHKVVEIHDIDTRALVLHIRNNKTMLAVISNETYNLTFKEAKATIKYGKHTLNSNLASRVSTSLDYYQWMQPLNRKLKFGYSIIRSFNSAINKKLHTSKKLRIIVLDLGVKFNILRYLKSFECEVIIVNYKSTYQQVMKFHPDGIVISNGPGDPAKINRVVVRVNKFINKKIPILGICLGHQILARCFEAKTFKLKFGHRGLNHPVGINKRMEITSQNHGFAVNFEFLKSNKFYANHLNLNDGTLAGISSQNFPLISVQYHPEGSPGPHDSNYLFKYWVYIIYKSKSS.

A CPSase region spans residues 1-209; that stretch reads MEKFKLLKLG…SAINKKLHTS (209 aa). The L-glutamine site is built by Ser55, Gly261, and Gly263. Residues 213-399 enclose the Glutamine amidotransferase type-1 domain; it reads RIIVLDLGVK…VYIIYKSKSS (187 aa). The active-site Nucleophile is the Cys289. Residues Leu290, Gln293, Asn329, Gly331, and Phe332 each coordinate L-glutamine. Active-site residues include His372 and Glu374.

The protein belongs to the CarA family. In terms of assembly, composed of two chains; the small (or glutamine) chain promotes the hydrolysis of glutamine to ammonia, which is used by the large (or ammonia) chain to synthesize carbamoyl phosphate. Tetramer of heterodimers (alpha,beta)4.

It localises to the plastid. Its subcellular location is the chloroplast. It catalyses the reaction hydrogencarbonate + L-glutamine + 2 ATP + H2O = carbamoyl phosphate + L-glutamate + 2 ADP + phosphate + 2 H(+). The enzyme catalyses L-glutamine + H2O = L-glutamate + NH4(+). Its pathway is amino-acid biosynthesis; L-arginine biosynthesis; carbamoyl phosphate from bicarbonate: step 1/1. It functions in the pathway pyrimidine metabolism; UMP biosynthesis via de novo pathway; (S)-dihydroorotate from bicarbonate: step 1/3. Small subunit of the glutamine-dependent carbamoyl phosphate synthetase (CPSase). CPSase catalyzes the formation of carbamoyl phosphate from the ammonia moiety of glutamine, carbonate, and phosphate donated by ATP, constituting the first step of 2 biosynthetic pathways, one leading to arginine and/or urea and the other to pyrimidine nucleotides. The small subunit (glutamine amidotransferase) binds and cleaves glutamine to supply the large subunit with the substrate ammonia. This chain is Carbamoyl phosphate synthase small chain, found in Cyanidium caldarium (Red alga).